Reading from the N-terminus, the 293-residue chain is 4-hydroxy-tetrahydrodipicolinate synthase (293 aa).

Position 44 (T44) interacts with pyruvate. The active-site Proton donor/acceptor is Y132. The Schiff-base intermediate with substrate role is filled by K161. I203 serves as a coordination point for pyruvate.

It belongs to the DapA family. Homotetramer; dimer of dimers.

Its subcellular location is the cytoplasm. The enzyme catalyses L-aspartate 4-semialdehyde + pyruvate = (2S,4S)-4-hydroxy-2,3,4,5-tetrahydrodipicolinate + H2O + H(+). The protein operates within amino-acid biosynthesis; L-lysine biosynthesis via DAP pathway; (S)-tetrahydrodipicolinate from L-aspartate: step 3/4. Its function is as follows. Catalyzes the condensation of (S)-aspartate-beta-semialdehyde [(S)-ASA] and pyruvate to 4-hydroxy-tetrahydrodipicolinate (HTPA). The polypeptide is 4-hydroxy-tetrahydrodipicolinate synthase (Sulfurihydrogenibium sp. (strain YO3AOP1)).